The following is a 169-amino-acid chain: Peptide deformylase (169 aa).

2 residues coordinate Fe cation: Cys91 and His133. Residue Glu134 is part of the active site. His137 contacts Fe cation.

Belongs to the polypeptide deformylase family. Fe(2+) serves as cofactor.

The enzyme catalyses N-terminal N-formyl-L-methionyl-[peptide] + H2O = N-terminal L-methionyl-[peptide] + formate. Removes the formyl group from the N-terminal Met of newly synthesized proteins. Requires at least a dipeptide for an efficient rate of reaction. N-terminal L-methionine is a prerequisite for activity but the enzyme has broad specificity at other positions. This Klebsiella pneumoniae subsp. pneumoniae (strain ATCC 700721 / MGH 78578) protein is Peptide deformylase.